Here is a 330-residue protein sequence, read N- to C-terminus: Copper-containing nitrite reductase (330 aa).

Plastocyanin-like domains lie at Gly1 to Val165 and Tyr166 to Ala330. Cu cation contacts are provided by His85, His90, His125, Cys126, His135, Met140, and His296.

Belongs to the multicopper oxidase family. In terms of assembly, homotrimer. Cu(2+) serves as cofactor. Cu(+) is required as a cofactor. The cofactor is FAD.

It localises to the periplasm. The catalysed reaction is nitric oxide + Fe(III)-[cytochrome c] + H2O = Fe(II)-[cytochrome c] + nitrite + 2 H(+). It functions in the pathway nitrogen metabolism; nitrate reduction (denitrification); dinitrogen from nitrate: step 2/4. The chain is Copper-containing nitrite reductase (nirK) from Alcaligenes xylosoxydans xylosoxydans (Achromobacter xylosoxidans).